The following is a 171-amino-acid chain: AP-3 complex subunit sigma (171 aa).

Belongs to the adaptor complexes small subunit family. Adaptor protein complex 3 (AP-3) is a heterotetramer composed of two large adaptins (delta-type subunit and beta-type subunit), a medium adaptin (mu-type subunit) and a small adaptin (sigma-type subunit).

Its subcellular location is the endosome membrane. Functionally, part of the AP-3 complex, an adaptor-related complex which is essential for the compartmentalization of the endocytic pathway. In Dictyostelium discoideum (Social amoeba), this protein is AP-3 complex subunit sigma (ap3s1).